A 299-amino-acid chain; its full sequence is Cathepsin B-like CP3 (299 aa).

Residues 1–19 form the signal peptide; it reads MKLFLLAAAAFSAPALTVS. 3 disulfides stabilise this stretch: cysteine 87–cysteine 114, cysteine 97–cysteine 140, and cysteine 133–cysteine 176. The active site involves cysteine 100. Residues histidine 244 and asparagine 265 contribute to the active site.

This sequence belongs to the peptidase C1 family.

The protein resides in the vacuole. Its function is as follows. Thiol protease which is required for parasite excystation and invasion of the proximal small intestine of the human host. The protein is Cathepsin B-like CP3 (CP3) of Giardia intestinalis (Giardia lamblia).